The sequence spans 172 residues: Signal peptidase complex catalytic subunit SEC11 (172 aa).

Over 1-14 (MLSSLGNPRQAATQ) the chain is Cytoplasmic. The chain crosses the membrane as a helical; Signal-anchor for type II membrane protein span at residues 15–35 (LLNFALILSTAFMMWKGLSVA). Over 36–172 (TDSPSPIVVV…MGLMVVLQRE (137 aa)) the chain is Lumenal. Residues Ser-49, His-90, and Asp-115 each act as charge relay system in the active site. The interval 158-169 (AMLGIMGLMVVL) is C-terminal short (CTS) helix.

This sequence belongs to the peptidase S26B family. In terms of assembly, component of the signal peptidase complex (SPC) composed of a catalytic subunit SEC11 and three accessory subunits SPC1, SPC2 and SPC3. The complex induces a local thinning of the ER membrane which is used to measure the length of the signal peptide (SP) h-region of protein substrates. This ensures the selectivity of the complex towards h-regions shorter than 18-20 amino acids. SPC associates with the translocon complex.

The protein localises to the endoplasmic reticulum membrane. It catalyses the reaction Cleavage of hydrophobic, N-terminal signal or leader sequences from secreted and periplasmic proteins.. Catalytic component of the signal peptidase complex (SPC) which catalyzes the cleavage of N-terminal signal sequences from nascent proteins as they are translocated into the lumen of the endoplasmic reticulum. Specifically cleaves N-terminal signal peptides that contain a hydrophobic alpha-helix (h-region) shorter than 18-20 amino acids. This Pyricularia oryzae (strain 70-15 / ATCC MYA-4617 / FGSC 8958) (Rice blast fungus) protein is Signal peptidase complex catalytic subunit SEC11 (SEC11).